We begin with the raw amino-acid sequence, 113 residues long: RING-box protein 2 (113 aa).

The disordered stretch occupies residues 1–26 (MADVEDGEEPCVLSSHSGSAGSKSGG). Residue Ala2 is modified to N-acetylalanine. Residues Cys50, Cys53, Cys61, Cys64, Cys73, Cys80, His82, His85, Cys87, Cys88, Cys99, and Cys102 each coordinate Zn(2+). The RING-type zinc-finger motif lies at 61–103 (CLRCQAENKQEDCVVVWGECNHSFHNCCMSLWVKQNNRCPLCQ).

The protein belongs to the RING-box family. Catalytic component of multiple cullin-5-RING E3 ubiquitin-protein ligase complexes (ECS complexes, also named CRL5 complexes) composed of CUL5, Elongin BC (ELOB and ELOC), RNF7/RBX2 and a variable SOCS box domain-containing protein as substrate-specific recognition component. Also interacts (with lower preference) with CUL1, CUL2, CUL3, CUL4A and CUL4B; additional evidence is however required to confirm this result in vivo. Interacts with UBE2F. Interacts with CSNK2B, the interaction is not affected by phosphorylation by CK2. May also interact with DCUN1D1, DCUN1D2, DCUN1D3, DCUN1D4 and DCUN1D5.

The protein resides in the cytoplasm. It is found in the nucleus. It catalyses the reaction S-ubiquitinyl-[E2 ubiquitin-conjugating enzyme]-L-cysteine + [acceptor protein]-L-lysine = [E2 ubiquitin-conjugating enzyme]-L-cysteine + N(6)-ubiquitinyl-[acceptor protein]-L-lysine.. The catalysed reaction is S-[NEDD8-protein]-yl-[E2 NEDD8-conjugating enzyme]-L-cysteine + [cullin]-L-lysine = [E2 NEDD8-conjugating enzyme]-L-cysteine + N(6)-[NEDD8-protein]-yl-[cullin]-L-lysine.. It functions in the pathway protein modification; protein ubiquitination. It participates in protein modification; protein neddylation. Functionally, catalytic component of multiple cullin-5-RING E3 ubiquitin-protein ligase complexes (ECS complexes), which mediate the ubiquitination and subsequent proteasomal degradation of target proteins. It is thereby involved in various biological processes, such as cell cycle progression, signal transduction and transcription. The functional specificity of the E3 ubiquitin-protein ligase ECS complexes depend on the variable SOCS box-containing substrate recognition component. Within ECS complexes, RNF7/RBX2 recruits the E2 ubiquitination enzyme to the complex via its RING-type and brings it into close proximity to the substrate. Catalytic subunit of various SOCS-containing ECS complexes, such as the ECS(SOCS7) complex, that regulate reelin signaling by mediating ubiquitination and degradation of DAB1. The ECS(SOCS2) complex mediates the ubiquitination and subsequent proteasomal degradation of phosphorylated EPOR and GHR. Promotes ubiquitination and degradation of NF1, thereby regulating Ras protein signal transduction. As part of the ECS(ASB9) complex, catalyzes ubiquitination and degradation of CKB. The ECS(SPSB3) complex catalyzes ubiquitination of nuclear CGAS. As part of the ECS(RAB40C) complex, mediates ANKRD28 ubiquitination and degradation, thereby inhibiting protein phosphatase 6 (PP6) complex activity and focal adhesion assembly during cell migration. As part of some ECS complex, catalyzes 'Lys-11'-linked ubiquitination and degradation of BTRC. ECS complexes and ARIH2 collaborate in tandem to mediate ubiquitination of target proteins; ARIH2 mediating addition of the first ubiquitin on CRLs targets. Specifically catalyzes the neddylation of CUL5 via its interaction with UBE2F. Does not catalyze neddylation of other cullins (CUL1, CUL2, CUL3, CUL4A or CUL4B). May play a role in protecting cells from apoptosis induced by redox agents. This is RING-box protein 2 from Mus musculus (Mouse).